The sequence spans 581 residues: NADH-quinone oxidoreductase subunit C/D (581 aa).

The interval 1–172 is NADH dehydrogenase I subunit C; it reads MSATDLVSEL…PLFNMTAALF (172 aa). The tract at residues 196–581 is NADH dehydrogenase I subunit D; the sequence is ELMILNYGPH…IDYVMSDVDR (386 aa).

In the N-terminal section; belongs to the complex I 30 kDa subunit family. This sequence in the C-terminal section; belongs to the complex I 49 kDa subunit family. NDH-1 is composed of 13 different subunits. Subunits NuoB, CD, E, F, and G constitute the peripheral sector of the complex.

The protein localises to the cell inner membrane. The catalysed reaction is a quinone + NADH + 5 H(+)(in) = a quinol + NAD(+) + 4 H(+)(out). Its function is as follows. NDH-1 shuttles electrons from NADH, via FMN and iron-sulfur (Fe-S) centers, to quinones in the respiratory chain. The immediate electron acceptor for the enzyme in this species is believed to be ubiquinone. Couples the redox reaction to proton translocation (for every two electrons transferred, four hydrogen ions are translocated across the cytoplasmic membrane), and thus conserves the redox energy in a proton gradient. The chain is NADH-quinone oxidoreductase subunit C/D from Rhodopseudomonas palustris (strain HaA2).